The following is a 526-amino-acid chain: Cytochrome P450 monooxygenase 253 (526 aa).

The next 3 membrane-spanning stretches (helical) occupy residues 13–33 (IASS…LLLI), 115–135 (FIMA…GYGK), and 306–326 (IGAG…AMTL). Residue Cys451 coordinates heme.

This sequence belongs to the cytochrome P450 family. The cofactor is heme.

The protein localises to the membrane. It participates in secondary metabolite biosynthesis. In terms of biological role, cytochrome P450 monooxygenase that is able to use delta(6)-protoilludene as a substrate to produce delta(6)-protoilludene-8-ol. This chain is Cytochrome P450 monooxygenase 253, found in Postia placenta (strain ATCC 44394 / Madison 698-R) (Brown rot fungus).